A 629-amino-acid chain; its full sequence is Putrebactin synthase (629 aa).

Belongs to the IucA/IucC family. As to quaternary structure, homodimer.

The catalysed reaction is 2 N-(3-carboxypropanoyl)-N-hydroxyputrescine + 2 ATP = putrebactin + 2 AMP + 2 diphosphate + 2 H(+). It catalyses the reaction 2 N-(3-carboxypropanoyl)-N-hydroxyputrescine + ATP = pre-putrebactin + AMP + diphosphate + H(+). It carries out the reaction pre-putrebactin + ATP = putrebactin + AMP + diphosphate + H(+). The protein operates within siderophore biosynthesis. With respect to regulation, requires Mg(2+) for activity. Ligase involved in the biosynthesis of the siderophore putrebactin. Catalyzes the ATP-dependent head-to-tail dimerization of N-hydroxy-N-succinyl-putrescine (HSP) to give pre-putrebactin and subsequent macrocyclization of pre-putrebactin to give putrebactin. This is Putrebactin synthase from Shewanella sp. (strain MR-4).